Consider the following 139-residue polypeptide: D-ribose pyranase (139 aa).

H20 acts as the Proton donor in catalysis. Residues D28, H106, and Y128–N130 contribute to the substrate site.

It belongs to the RbsD / FucU family. RbsD subfamily. Homodecamer.

The protein resides in the cytoplasm. It catalyses the reaction beta-D-ribopyranose = beta-D-ribofuranose. It functions in the pathway carbohydrate metabolism; D-ribose degradation; D-ribose 5-phosphate from beta-D-ribopyranose: step 1/2. Catalyzes the interconversion of beta-pyran and beta-furan forms of D-ribose. This is D-ribose pyranase from Escherichia coli O6:H1 (strain CFT073 / ATCC 700928 / UPEC).